The following is a 302-amino-acid chain: Surfeit locus protein 4 homolog (302 aa).

6 consecutive transmembrane segments (helical) span residues 95 to 115, 120 to 140, 193 to 213, 215 to 235, 236 to 256, and 271 to 291; these read APLL…LVVF, AYAI…YGLI, VLLI…ISWT, ILVH…FKAK, FFAA…NSFW, and DFFQ…TGPG. A Di-lysine motif motif is present at residues 299–302; that stretch reads KKIY.

Belongs to the SURF4 family.

It localises to the endoplasmic reticulum membrane. The sequence is that of Surfeit locus protein 4 homolog from Schizosaccharomyces pombe (strain 972 / ATCC 24843) (Fission yeast).